Here is a 938-residue protein sequence, read N- to C-terminus: Isoleucine--tRNA ligase (938 aa).

Residues 58-68 (PYANGSIHIGH) carry the 'HIGH' region motif. Glutamate 561 contributes to the L-isoleucyl-5'-AMP binding site. Residues 602–606 (KMSKS) carry the 'KMSKS' region motif. ATP is bound at residue lysine 605. Residues cysteine 901, cysteine 904, cysteine 921, and cysteine 924 each contribute to the Zn(2+) site.

The protein belongs to the class-I aminoacyl-tRNA synthetase family. IleS type 1 subfamily. Monomer. Requires Zn(2+) as cofactor.

It localises to the cytoplasm. The catalysed reaction is tRNA(Ile) + L-isoleucine + ATP = L-isoleucyl-tRNA(Ile) + AMP + diphosphate. Catalyzes the attachment of isoleucine to tRNA(Ile). As IleRS can inadvertently accommodate and process structurally similar amino acids such as valine, to avoid such errors it has two additional distinct tRNA(Ile)-dependent editing activities. One activity is designated as 'pretransfer' editing and involves the hydrolysis of activated Val-AMP. The other activity is designated 'posttransfer' editing and involves deacylation of mischarged Val-tRNA(Ile). This Citrobacter koseri (strain ATCC BAA-895 / CDC 4225-83 / SGSC4696) protein is Isoleucine--tRNA ligase.